The primary structure comprises 886 residues: Alanine--tRNA ligase (886 aa).

Zn(2+) contacts are provided by His570, His574, Cys673, and His677.

Belongs to the class-II aminoacyl-tRNA synthetase family. Zn(2+) is required as a cofactor.

It is found in the cytoplasm. It catalyses the reaction tRNA(Ala) + L-alanine + ATP = L-alanyl-tRNA(Ala) + AMP + diphosphate. Catalyzes the attachment of alanine to tRNA(Ala) in a two-step reaction: alanine is first activated by ATP to form Ala-AMP and then transferred to the acceptor end of tRNA(Ala). Also edits incorrectly charged Ser-tRNA(Ala) and Gly-tRNA(Ala) via its editing domain. In Chlorobium chlorochromatii (strain CaD3), this protein is Alanine--tRNA ligase.